Reading from the N-terminus, the 690-residue chain is Methionine--tRNA ligase (690 aa).

The 'HIGH' region signature appears at 13–23 (PYANGQIHIGH). Residues cysteine 144, cysteine 147, cysteine 157, and cysteine 160 each contribute to the Zn(2+) site. A 'KMSKS' region motif is present at residues 335–339 (KMSKS). Lysine 338 is a binding site for ATP. A tRNA-binding domain is found at 584–690 (DFAKIDLRVA…SGAVPGMRIR (107 aa)).

This sequence belongs to the class-I aminoacyl-tRNA synthetase family. MetG type 1 subfamily. In terms of assembly, homodimer. The cofactor is Zn(2+).

It localises to the cytoplasm. It catalyses the reaction tRNA(Met) + L-methionine + ATP = L-methionyl-tRNA(Met) + AMP + diphosphate. Functionally, is required not only for elongation of protein synthesis but also for the initiation of all mRNA translation through initiator tRNA(fMet) aminoacylation. The sequence is that of Methionine--tRNA ligase from Cupriavidus metallidurans (strain ATCC 43123 / DSM 2839 / NBRC 102507 / CH34) (Ralstonia metallidurans).